Reading from the N-terminus, the 441-residue chain is Putative collagenous domain-containing protein R238 (441 aa).

In terms of domain architecture, Collagen-like spans 164–199 (GCKGEKGIKGELGPKGNTGQKGDIGSKGDRGDKGEP). Positions 171-198 (IKGELGPKGNTGQKGDIGSKGDRGDKGE) are disordered. The segment covering 187-198 (IGSKGDRGDKGE) has biased composition (basic and acidic residues).

This is Putative collagenous domain-containing protein R238 from Acanthamoeba polyphaga (Amoeba).